Here is a 559-residue protein sequence, read N- to C-terminus: MGEVKSDIEIARAARKQPIMEVGAKLGIPPEHLLPYGHDKAKVSAEFIAAQNEKRNGRLILVTAINPTPAGEGKTTTTVGLGDGLNRIGKKAIVCIREASLGPCFGIKGGAAGGGYAQVVPMEDINLHFTGDFHAITSAHNLLSALIDNHIYWGNEQAIDIRRIAWRRVMDMNDRALRQIVGSLGGVANGYPRETGFDITVASEVMAILCLAMDIKDLEKRLGNIIIGYRRDKSPVFARDIKADGAMAVLLKDAMQPNLVQTLENNPAFVHGGPFANIAHGCNSVVATTTALKLADYVVTEAGFGADLGAEKFFDIKCRKAGLTPDAAVIVATVRAIKMNGGVKREDLGRESVEAVRKGCANLGRHIQNVKKFGVPVLVAINHFTSDTEAEVRAIKDYVRTLGSEAVLCKHWAEGSAGIEELAYKVVDLANAGHSQFSPLYPDEMPLFQKIETIAKDIYHASEVIADKLVREQLRTWEDQGYGDLPICMAKTQYSFSTDPNLRGAPTGHAVPIREVRLAAGAGFIVVITGEIMTMPGLPKVPSSERIRLNEQGYIEGLF.

ATP is bound at residue 68 to 75 (TPAGEGKT).

This sequence belongs to the formate--tetrahydrofolate ligase family.

The catalysed reaction is (6S)-5,6,7,8-tetrahydrofolate + formate + ATP = (6R)-10-formyltetrahydrofolate + ADP + phosphate. It participates in one-carbon metabolism; tetrahydrofolate interconversion. The sequence is that of Formate--tetrahydrofolate ligase from Rhizobium meliloti (strain 1021) (Ensifer meliloti).